We begin with the raw amino-acid sequence, 381 residues long: L-lactate dehydrogenase A-like 6B (381 aa).

Residues 101–106 and R148 each bind NAD(+); that span reads DLDEDK. Substrate contacts are provided by R155, N187, and R218. Position 187 (N187) interacts with NAD(+). Catalysis depends on H242, which acts as the Proton acceptor. T297 serves as a coordination point for substrate.

Belongs to the LDH/MDH superfamily. LDH family. Testis specific.

It catalyses the reaction (S)-lactate + NAD(+) = pyruvate + NADH + H(+). Its pathway is fermentation; pyruvate fermentation to lactate; (S)-lactate from pyruvate: step 1/1. The sequence is that of L-lactate dehydrogenase A-like 6B (LDHAL6B) from Homo sapiens (Human).